The sequence spans 203 residues: Small ribosomal subunit protein uS4c (203 aa).

The segment at 15–43 (LGSLPGLTSKRPRSGSDLRNQSRSGKRSQ) is disordered. The 81-residue stretch at 89 to 169 (MRLDNILFRL…LPKHLTLHSL (81 aa)) folds into the S4 RNA-binding domain.

The protein belongs to the universal ribosomal protein uS4 family. In terms of assembly, part of the 30S ribosomal subunit. Contacts protein S5. The interaction surface between S4 and S5 is involved in control of translational fidelity.

The protein resides in the plastid. It is found in the chloroplast. One of the primary rRNA binding proteins, it binds directly to 16S rRNA where it nucleates assembly of the body of the 30S subunit. In terms of biological role, with S5 and S12 plays an important role in translational accuracy. This Illicium oligandrum (Star anise) protein is Small ribosomal subunit protein uS4c (rps4).